Consider the following 426-residue polypeptide: 4-hydroxy-3-methylbut-2-en-1-yl diphosphate synthase (flavodoxin) (426 aa).

[4Fe-4S] cluster is bound by residues C310, C313, C356, and E363.

The protein belongs to the IspG family. Requires [4Fe-4S] cluster as cofactor.

The enzyme catalyses (2E)-4-hydroxy-3-methylbut-2-enyl diphosphate + oxidized [flavodoxin] + H2O + 2 H(+) = 2-C-methyl-D-erythritol 2,4-cyclic diphosphate + reduced [flavodoxin]. It participates in isoprenoid biosynthesis; isopentenyl diphosphate biosynthesis via DXP pathway; isopentenyl diphosphate from 1-deoxy-D-xylulose 5-phosphate: step 5/6. Converts 2C-methyl-D-erythritol 2,4-cyclodiphosphate (ME-2,4cPP) into 1-hydroxy-2-methyl-2-(E)-butenyl 4-diphosphate. This is 4-hydroxy-3-methylbut-2-en-1-yl diphosphate synthase (flavodoxin) from Rhodopseudomonas palustris (strain BisA53).